A 535-amino-acid chain; its full sequence is Probable lipid II flippase MurJ (535 aa).

12 helical membrane-spanning segments follow: residues 90-110 (VLFT…PFIV), 131-151 (FATI…MAGM), 159-179 (FAAA…LAYA), 192-212 (DLSW…WVAV), 233-253 (LLVL…NLLI), 274-294 (IYQL…LPEL), 316-336 (FTLF…EPIV), 350-370 (TVVV…FVLI), 388-408 (IFAG…FPSL), 413-433 (IATA…ATLV), 451-471 (LVIA…WLAF), and 484-504 (LTLC…AFGI).

This sequence belongs to the MurJ/MviN family.

The protein localises to the cell inner membrane. The protein operates within cell wall biogenesis; peptidoglycan biosynthesis. Its function is as follows. Involved in peptidoglycan biosynthesis. Transports lipid-linked peptidoglycan precursors from the inner to the outer leaflet of the cytoplasmic membrane. In Rhizobium meliloti (strain 1021) (Ensifer meliloti), this protein is Probable lipid II flippase MurJ.